A 148-amino-acid polypeptide reads, in one-letter code: MVGPSRLAGGGLLLLLLLALLPLALDGKPAPPPQALPKDPAAASAAERIMRALLPDSKSSRPATDRMVHPEHQAGGGDTRRLQEPAKKGLLISCFDRRIDRISHTSDMGCRHRKDPPRAPPAAPSAAPLAVTWLIRDLRADSKQSRAA.

Positions 1–27 are cleaved as a signal peptide; it reads MVGPSRLAGGGLLLLLLLALLPLALDG. The propeptide occupies 28 to 83; sequence KPAPPPQALPKDPAAASAAERIMRALLPDSKSSRPATDRMVHPEHQAGGGDTRRLQ. Disordered stretches follow at residues 54-83 and 105-127; these read LPDS…RRLQ and TSDM…PSAA. The span at 63-83 shows a compositional bias: basic and acidic residues; that stretch reads ATDRMVHPEHQAGGGDTRRLQ. A disulfide bridge connects residues cysteine 94 and cysteine 110. The propeptide occupies 130–148; it reads AVTWLIRDLRADSKQSRAA.

It belongs to the natriuretic peptide family. In terms of tissue distribution, expressed by the venom gland.

It localises to the secreted. Functionally, natriuretic peptide that dose-dependently induces the rapid relaxation of rat aortic strips phenylephrine-precontracted. Acts by stimulating cGMP production in a dose-dependent manner (by probably activating NPR1 and/or NPR2). May also show potent hypotensive effects. This chain is Natriuretic peptide BF131, found in Bungarus flaviceps flaviceps (Red-headed krait).